Reading from the N-terminus, the 550-residue chain is Atherin (550 aa).

Residues 1 to 11 (MAGPPALPPPE) show a composition bias toward pro residues. Disordered stretches follow at residues 1 to 32 (MAGP…SPHY) and 93 to 468 (SYRN…KEKP). Residues 12–30 (TAAAATTAAAAASSSAASP) show a composition bias toward low complexity. Residues 24–100 (SSSAASPHYQ…SISYRNAARV (77 aa)) form the SAMD1-like winged helix (WH) domain. Residue T108 is modified to Phosphothreonine. Positions 125-138 (APPPTPAPPPPPAP) are enriched in pro residues. The segment covering 139–160 (VAAAAAPARAPRAAAAAAAATA) has biased composition (low complexity). The residue at position 163 (S163) is a Phosphoserine. Residues 170 to 179 (GPRAQRAAPL) are compositionally biased toward low complexity. Pro residues-rich tracts occupy residues 180–205 (AAPP…PPPA) and 214–245 (PLPP…PPPE). The segment covering 246–257 (GGAARAGGPARP) has biased composition (low complexity). S270 is modified (phosphoserine). A compositionally biased stretch (basic and acidic residues) spans 290–300 (AAARGRLERTR). Positions 337 to 355 (KEEEEEEEEDDEDDDDDVV) are enriched in acidic residues. Positions 437-448 (SPSPVPLPPGKP) are enriched in pro residues. In terms of domain architecture, SAM spans 474 to 542 (WTVMDVVEYF…KVLQQGHFED (69 aa)).

As to quaternary structure, homopolymerize into a closed pentameric ring. Interacts (via SAM domain) with L3MBTL3 (via SAM domain); the interaction mediates L3MBTL3 binding to chromatin. Interacts (via WH domain) with KDM1A; the interaction modulates KDM1A function.

Its subcellular location is the nucleus. It is found in the chromosome. The protein resides in the secreted. Functionally, unmethylated CpG islands (CGIs)-binding protein which localizes to H3K4me3-decorated CGIs, where it acts as a transcriptional repressor. Tethers L3MBTL3 to chromatin and interacts with the KDM1A histone demethylase complex to modulate H3K4me2 and H3K4me3 levels at CGIs. Plays a role in atherogenesis by binding with LDL on cell surface and promoting LDL oxidation which leads to the formation of foam cell. This Oryctolagus cuniculus (Rabbit) protein is Atherin (SAMD1).